Consider the following 466-residue polypeptide: ATP synthase subunit beta (466 aa).

156–163 contacts ATP; the sequence is GGAGVGKT.

The protein belongs to the ATPase alpha/beta chains family. In terms of assembly, F-type ATPases have 2 components, CF(1) - the catalytic core - and CF(0) - the membrane proton channel. CF(1) has five subunits: alpha(3), beta(3), gamma(1), delta(1), epsilon(1). CF(0) has three main subunits: a(1), b(2) and c(9-12). The alpha and beta chains form an alternating ring which encloses part of the gamma chain. CF(1) is attached to CF(0) by a central stalk formed by the gamma and epsilon chains, while a peripheral stalk is formed by the delta and b chains.

It is found in the cell inner membrane. The catalysed reaction is ATP + H2O + 4 H(+)(in) = ADP + phosphate + 5 H(+)(out). Produces ATP from ADP in the presence of a proton gradient across the membrane. The catalytic sites are hosted primarily by the beta subunits. This chain is ATP synthase subunit beta, found in Dechloromonas aromatica (strain RCB).